Here is a 553-residue protein sequence, read N- to C-terminus: ATP synthase F(1) complex subunit alpha, mitochondrial (553 aa).

The transit peptide at 1–43 (MLSVRVAAAVVRALPRRAGLVSRNALGSSFIAARNFHASNTHL) directs the protein to the mitochondrion. Residues Ser-53 and Ser-65 each carry the phosphoserine modification. Ser-76 carries the phosphoserine; alternate modification. Ser-76 carries O-linked (GlcNAc) serine; alternate glycosylation. Phosphoserine is present on Ser-106. 3 positions are modified to N6-acetyllysine: Lys-123, Lys-126, and Lys-132. Residue Thr-134 is modified to Phosphothreonine. Lys-161 is modified (N6-acetyllysine; alternate). An N6-succinyllysine; alternate modification is found at Lys-161. Position 166 is a phosphoserine (Ser-166). Lys-167 carries the post-translational modification N6-acetyllysine; alternate. Lys-167 bears the N6-succinyllysine; alternate mark. The residue at position 184 (Ser-184) is a Phosphoserine. Position 204 is an omega-N-methylarginine (Arg-204). ATP-binding residues include Gln-215, Gly-217, Lys-218, Thr-219, and Ser-220. Thr-219 lines the Mg(2+) pocket. An N6-acetyllysine; alternate mark is found at Lys-230 and Lys-239. N6-succinyllysine; alternate is present on residues Lys-230 and Lys-239. Lys-240 bears the N6-acetyllysine mark. An N6-acetyllysine; alternate mark is found at Lys-261 and Lys-305. N6-succinyllysine; alternate is present on residues Lys-261 and Lys-305. Asp-312 serves as a coordination point for Mg(2+). N6-acetyllysine; alternate is present on Lys-427. Lys-427 is subject to N6-succinyllysine; alternate. Lys-434 carries the post-translational modification N6-acetyllysine. ATP contacts are provided by Gln-473 and Gln-475. Residues Lys-498, Lys-506, Lys-531, and Lys-539 each carry the N6-acetyllysine; alternate modification. N6-succinyllysine; alternate occurs at positions 498, 506, 531, and 539. The residue at position 541 (Lys-541) is an N6-acetyllysine.

The protein belongs to the ATPase alpha/beta chains family. In terms of assembly, homotrimer. Component of the ATP synthase complex composed at least of ATP5F1A/subunit alpha, ATP5F1B/subunit beta, ATP5MC1/subunit c (homooctomer), MT-ATP6/subunit a, MT-ATP8/subunit 8, ATP5ME/subunit e, ATP5MF/subunit f, ATP5MG/subunit g, ATP5MK/subunit k, ATP5MJ/subunit j, ATP5F1C/subunit gamma, ATP5F1D/subunit delta, ATP5F1E/subunit epsilon, ATP5PF/subunit F6, ATP5PB/subunit b, ATP5PD/subunit d, ATP5PO/subunit OSCP. ATP synthase complex consists of a soluble F(1) head domain (subunits alpha(3) and beta(3)) - the catalytic core - and a membrane F(0) domain - the membrane proton channel (subunits c, a, 8, e, f, g, k and j). These two domains are linked by a central stalk (subunits gamma, delta, and epsilon) rotating inside the F1 region and a stationary peripheral stalk (subunits F6, b, d, and OSCP). Interacts with ATPAF2. Interacts with HRG; the interaction occurs on the surface of T-cells and alters the cell morphology when associated with concanavalin (in vitro). Interacts with PLG (angiostatin peptide); the interaction inhibits most of the angiogenic properties of angiostatin. Interacts with BLOC1S1. Interacts with BCL2L1 isoform BCL-X(L); the interaction mediates the association of BCL2L1 isoform BCL-X(L) with the mitochondrial membrane F(1)F(0) ATP synthase and enhances neurons metabolic efficiency. Interacts with CLN5 and PPT1. Interacts with S100A1; this interaction increases F1-ATPase activity. Interacts with ABCB7; this interaction allows the regulation of cellular iron homeostasis and cellular reactive oxygen species (ROS) levels in cardiomyocytes. Post-translationally, acetylated on lysine residues. BLOC1S1 is required for acetylation.

It is found in the mitochondrion inner membrane. It localises to the cell membrane. Its function is as follows. Subunit alpha, of the mitochondrial membrane ATP synthase complex (F(1)F(0) ATP synthase or Complex V) that produces ATP from ADP in the presence of a proton gradient across the membrane which is generated by electron transport complexes of the respiratory chain. ATP synthase complex consist of a soluble F(1) head domain - the catalytic core - and a membrane F(1) domain - the membrane proton channel. These two domains are linked by a central stalk rotating inside the F(1) region and a stationary peripheral stalk. During catalysis, ATP synthesis in the catalytic domain of F(1) is coupled via a rotary mechanism of the central stalk subunits to proton translocation. In vivo, can only synthesize ATP although its ATP hydrolase activity can be activated artificially in vitro. With the catalytic subunit beta (ATP5F1B), forms the catalytic core in the F(1) domain. Subunit alpha does not bear the catalytic high-affinity ATP-binding sites. In Pongo abelii (Sumatran orangutan), this protein is ATP synthase F(1) complex subunit alpha, mitochondrial.